Here is a 530-residue protein sequence, read N- to C-terminus: Cation channel sperm-associated protein 2 (530 aa).

Residues 1-108 lie on the Cytoplasmic side of the membrane; sequence MAAYQQEEQM…LWAGWVLECP (108 aa). A helical transmembrane segment spans residues 109-131; that stretch reads LFKNFIIFLVFLNTIILMVEIEL. At 132 to 140 the chain is on the extracellular side; it reads LESTNTKLW. A helical membrane pass occupies residues 141–166; that stretch reads PLKLTLEVAAWFILLIFILEILLKWL. Topologically, residues 167–175 are cytoplasmic; sequence SNFSVFWKS. A helical membrane pass occupies residues 176 to 200; that stretch reads AWNVFDFVVTMLSLLPEVVVLVGVT. Over 201–203 the chain is Extracellular; sequence GQS. The helical transmembrane segment at 204–222 threads the bilayer; the sequence is VWLQLLRICRVLRSLKLLA. Over 223–239 the chain is Cytoplasmic; it reads QFRQIQIIILVLVRALK. Residues 240 to 262 form a helical membrane-spanning segment; that stretch reads SMTFLLMLLLIFFYIFAVTGVYV. Over 263-281 the chain is Extracellular; the sequence is FSEYTRSPRQDLEYHVFFS. An intramembrane region (helical; Pore-forming) is located at residues 282–294; sequence DLPNSLVTVFILF. The Extracellular portion of the chain corresponds to 295-314; that stretch reads TLDHWYALLQDVWKVPEVSR. Residues 315–341 traverse the membrane as a helical segment; sequence IFSSIYFILWLLLGSIIFRSIIVAMMV. The Cytoplasmic segment spans residues 342–530; it reads TNFQNIRKEL…VQALMNLEDK (189 aa). Residues 378–458 form a disordered region; it reads MSHEALTSSH…TSSSYSSSSE (81 aa). The segment covering 429-440 has biased composition (basic and acidic residues); the sequence is KTEETLSKKREY. A compositionally biased stretch (low complexity) spans 442-458; sequence SSSCVSSTSSSYSSSSE.

Belongs to the cation channel sperm-associated (TC 1.A.1.19) family. As to quaternary structure, component of the CatSper complex or CatSpermasome composed of the core pore-forming members CATSPER1, CATSPER2, CATSPER3 and CATSPER4 as well as auxiliary members CATSPERB, CATSPERG, CATSPERD, CATSPERE, CATSPERZ, C2CD6/CATSPERT, TMEM249, TMEM262 and EFCAB9. HSPA1 may be an additional auxiliary complex member. The core complex members CATSPER1, CATSPER2, CATSPER3 and CATSPER4 form a heterotetrameric channel. The auxiliary CATSPERB, CATSPERG, CATSPERD and CATSPERE subunits form a pavilion-like structure over the pore which stabilizes the complex through interactions with CATSPER4, CATSPER3, CATSPER1 and CATSPER2 respectively. TMEM262/CATSPERH interacts with CATSPERB, further stabilizing the complex. C2CD6/CATSPERT interacts at least with CATSPERD and is required for targeting the CatSper complex in the flagellar membrane. Interacts with Ca(v)3.3/CACNA1I, leading to suppression of T-type calcium channel activity. Testis-specific.

It localises to the cell projection. The protein localises to the cilium. Its subcellular location is the flagellum membrane. It carries out the reaction Ca(2+)(in) = Ca(2+)(out). With respect to regulation, the CatSper calcium channel is indirectly activated by extracellular progesterone and prostaglandins following the sequence: progesterone &gt; PGF1-alpha = PGE1 &gt; PGA1 &gt; PGE2 &gt;&gt; PGD2. The CatSper calcium channel is directly inhibited by endocannabinoid 2-arachidonoylglycerol (2AG). Indirect activation by progesterone takes place via the following mechanism: progesterone binds and activates the acylglycerol lipase ABHD2, which in turn mediates hydrolysis of 2AG inhibitor, relieving inhibition of the CatSper channel. The primary effect of progesterone activation is to shift voltage dependence towards more physiological, negative membrane potentials; it is not mediated by metabotropic receptors and second messengers. Sperm capacitation enhances the effect of progesterone by providing additional negative shift. Also activated by the elevation of intracellular pH. Functionally, pore-forming subunit of the CatSper complex, a sperm-specific voltage-gated calcium channel, that plays a central role in calcium-dependent physiological responses essential for successful fertilization, such as sperm hyperactivation, acrosome reaction and chemotaxis towards the oocyte. This Homo sapiens (Human) protein is Cation channel sperm-associated protein 2 (CATSPER2).